The primary structure comprises 29 residues: Beta-hexatoxin-Mr1a (29 aa).

Intrachain disulfides connect Cys-2-Cys-16, Cys-9-Cys-21, and Cys-15-Cys-26.

Belongs to the neurotoxin 15 family. 01 (magi-5) subfamily. As to expression, expressed by the venom gland.

It localises to the secreted. Functionally, insect and vertebrate active toxin. Binds at site 4 of mammalian voltage-gated sodium channels and shifts the activation voltage of the mammalian rNav1.2a (SCN2A) channel to more hyperpolarized voltages, whereas the insect channel, DmNav1 (para), is not affected. Causes temporary paralysis when injected into lepidopteran larvae at 8.6 nmol/g. A low intracranial injection dose into mice causes lacrimation, closure of the eyes and sweating. A high injection dose causes extensive lacrimation and death. In Macrothele raveni (Funnel-web spider), this protein is Beta-hexatoxin-Mr1a.